Here is a 553-residue protein sequence, read N- to C-terminus: Sensitive to high expression protein 9 homolog, mitochondrial (553 aa).

The segment at 61 to 174 (FFSTQPPKDT…TAQPELPSRT (114 aa)) is disordered. Over residues 62-84 (FSTQPPKDTPENMNNKETGSSNV) the composition is skewed to polar residues. Basic and acidic residues predominate over residues 103-116 (AKEDTTDATNKSET). The segment covering 133 to 160 (SDVSSASTSDSANSSETTTTTSETTPEN) has biased composition (low complexity). Coiled coils occupy residues 210–241 (SAIE…HNYK) and 277–309 (RLDH…DLNA). Residues 331 to 351 (WGTWGLMGVNVLLFLVLQFVA) traverse the membrane as a helical segment. Over 352 to 523 (EPWRRKRLMK…RIDLKMRDVS (172 aa)) the chain is Mitochondrial intermembrane. 2 disordered regions span residues 408–428 (ALAS…RTEG) and 443–497 (AEEA…QTLS). Composition is skewed to low complexity over residues 443–473 (AEEA…QTPE) and 484–495 (TWKQTAQKWQQT). A helical membrane pass occupies residues 524 to 544 (LLALESAATGAAVVASVAFFV). At 545–553 (LRSSGSGKA) the chain is on the mitochondrial matrix side.

Belongs to the SHE9 family. Homooligomer.

It is found in the mitochondrion inner membrane. Required for the maintenance of the structure of the mitochondrial inner membrane. Involved in mitochondrial morphology. Causes growth arrest when highly overexpressed. In Neurospora crassa (strain ATCC 24698 / 74-OR23-1A / CBS 708.71 / DSM 1257 / FGSC 987), this protein is Sensitive to high expression protein 9 homolog, mitochondrial (she-9).